The chain runs to 432 residues: 3-phosphoshikimate 1-carboxyvinyltransferase (432 aa).

3 residues coordinate 3-phosphoshikimate: K22, S23, and R27. K22 lines the phosphoenolpyruvate pocket. G96 and R127 together coordinate phosphoenolpyruvate. 3-phosphoshikimate-binding residues include S173, S174, Q175, S201, D316, N339, and K343. Residue Q175 participates in phosphoenolpyruvate binding. Catalysis depends on D316, which acts as the Proton acceptor. Phosphoenolpyruvate contacts are provided by R347, R391, and K416.

It belongs to the EPSP synthase family. As to quaternary structure, monomer.

The protein localises to the cytoplasm. It carries out the reaction 3-phosphoshikimate + phosphoenolpyruvate = 5-O-(1-carboxyvinyl)-3-phosphoshikimate + phosphate. The protein operates within metabolic intermediate biosynthesis; chorismate biosynthesis; chorismate from D-erythrose 4-phosphate and phosphoenolpyruvate: step 6/7. In terms of biological role, catalyzes the transfer of the enolpyruvyl moiety of phosphoenolpyruvate (PEP) to the 5-hydroxyl of shikimate-3-phosphate (S3P) to produce enolpyruvyl shikimate-3-phosphate and inorganic phosphate. In Haemophilus influenzae (strain PittGG), this protein is 3-phosphoshikimate 1-carboxyvinyltransferase.